The following is a 599-amino-acid chain: Sulfite reductase [NADPH] flavoprotein alpha-component (599 aa).

The Flavodoxin-like domain maps to 64-202; sequence VTLISASQTG…AASEWRARVV (139 aa). Residues 70–75, 117–120, and 153–162 contribute to the FMN site; these read SQTGNA, STQG, and LGDTSYEFFC. Residues 234 to 448 enclose the FAD-binding FR-type domain; the sequence is DAPLTATLSV…IEHNDNFRLP (215 aa). FAD is bound by residues T322, A356, 386 to 389, 404 to 406, Y410, and 419 to 422; these read RLYS, TVG, and GGAS. NADP(+) contacts are provided by residues 519–520, 525–529, and D561; these read SR and KIYVQ. Y599 serves as a coordination point for FAD.

The protein belongs to the NADPH-dependent sulphite reductase flavoprotein subunit CysJ family. In the N-terminal section; belongs to the flavodoxin family. It in the C-terminal section; belongs to the flavoprotein pyridine nucleotide cytochrome reductase family. As to quaternary structure, alpha(8)-beta(8). The alpha component is a flavoprotein, the beta component is a hemoprotein. It depends on FAD as a cofactor. Requires FMN as cofactor.

It catalyses the reaction hydrogen sulfide + 3 NADP(+) + 3 H2O = sulfite + 3 NADPH + 4 H(+). It functions in the pathway sulfur metabolism; hydrogen sulfide biosynthesis; hydrogen sulfide from sulfite (NADPH route): step 1/1. In terms of biological role, component of the sulfite reductase complex that catalyzes the 6-electron reduction of sulfite to sulfide. This is one of several activities required for the biosynthesis of L-cysteine from sulfate. The flavoprotein component catalyzes the electron flow from NADPH -&gt; FAD -&gt; FMN to the hemoprotein component. The protein is Sulfite reductase [NADPH] flavoprotein alpha-component of Salmonella paratyphi A (strain ATCC 9150 / SARB42).